Reading from the N-terminus, the 352-residue chain is B1 bradykinin receptor (352 aa).

At 1-41 (MASWPPLELQSSNQSQLFPQNATACDNAPEAWDLLHRVLPT) the chain is on the extracellular side. N-linked (GlcNAc...) asparagine glycosylation is found at Asn13 and Asn21. The chain crosses the membrane as a helical span at residues 42 to 62 (FIISICSFGLLGNLFVLLVFL). The Cytoplasmic segment spans residues 63 to 72 (LPRRRLNVAE). Residues 73 to 93 (IYLANLAASDLVFVLGLPFWA) traverse the membrane as a helical segment. The Extracellular portion of the chain corresponds to 94–110 (ENIWNQFNWPFGALLCR). Residues Cys109 and Cys188 are joined by a disulfide bond. Residues 111–131 (GINGVIKANLFISIFLVVAIS) form a helical membrane-spanning segment. Over 132-153 (QDRYCLLVHPMASRRRQRRRQA) the chain is Cytoplasmic. A helical membrane pass occupies residues 154 to 174 (RVTCVLIWVVGGLLSIPTFLL). Residues 175–206 (RSIQAVPDLNITACILLLPHEAWHFARIVELN) lie on the Extracellular side of the membrane. N-linked (GlcNAc...) asparagine glycosylation is present at Asn184. The chain crosses the membrane as a helical span at residues 207 to 227 (ILAFLLPLAAIVFFNYHILAS). Over 228–250 (LRGREEVSRTRCGGRKDSKTTAL) the chain is Cytoplasmic. A helical membrane pass occupies residues 251-271 (ILTLVVAFLVCWAPYHFFAFL). Residues 272–294 (EFLFQVQAIRGCFWEDFIDLGLQ) lie on the Extracellular side of the membrane. The chain crosses the membrane as a helical span at residues 295–315 (LANFLAFTNSSLNPVIYVFVG). The Cytoplasmic portion of the chain corresponds to 316–352 (RLFRTKVWELYKQCTPKSLAPISSSHRKEIFQLFWRN). Residue Cys329 is the site of S-palmitoyl cysteine attachment.

It belongs to the G-protein coupled receptor 1 family. Bradykinin receptor subfamily. BDKRB1 sub-subfamily.

It localises to the cell membrane. Functionally, this is a receptor for bradykinin. Could be a factor in chronic pain and inflammation. The sequence is that of B1 bradykinin receptor (BDKRB1) from Chlorocebus aethiops (Green monkey).